The sequence spans 477 residues: Glycogen synthase (477 aa).

Lys15 contacts ADP-alpha-D-glucose.

It belongs to the glycosyltransferase 1 family. Bacterial/plant glycogen synthase subfamily.

The enzyme catalyses [(1-&gt;4)-alpha-D-glucosyl](n) + ADP-alpha-D-glucose = [(1-&gt;4)-alpha-D-glucosyl](n+1) + ADP + H(+). It functions in the pathway glycan biosynthesis; glycogen biosynthesis. Synthesizes alpha-1,4-glucan chains using ADP-glucose. The protein is Glycogen synthase of Cronobacter sakazakii (strain ATCC BAA-894) (Enterobacter sakazakii).